The following is a 112-amino-acid chain: Mitochondrial import inner membrane translocase subunit TIM14-2 (112 aa).

The chain crosses the membrane as a helical span at residues 7–25; it reads AGAAVAAAAYAGKYGIEAW. The J domain occupies 53-112; the sequence is EAALILGVRESVAAEKVKEAHRRVMVANHPDAGGSHYLASKINEAKDMMLGKTKNSGSAF.

It belongs to the TIM14 family. As to quaternary structure, probable component of the PAM complex at least composed of a mitochondrial HSP70 protein, TIMM44 and TIMM14. The complex interacts with the TIMM23 component of the TIM17:23 complex.

The protein resides in the mitochondrion. The protein localises to the mitochondrion inner membrane. Component of the PAM complex, a complex required for the translocation of transit peptide-containing proteins from the inner membrane into the mitochondrial matrix in an ATP-dependent manner. This Arabidopsis thaliana (Mouse-ear cress) protein is Mitochondrial import inner membrane translocase subunit TIM14-2 (TIM14-2).